The following is a 272-amino-acid chain: Cytochrome c oxidase subunit 3 (272 aa).

7 consecutive transmembrane segments (helical) span residues 23–43, 45–65, 91–111, 137–157, 169–189, 210–230, and 249–269; these read PWPFVASLCAFSCAIGGVMYM, AYVNGSFILSISFFCLLLVMF, FGVILFIISEILFFFAFFWAF, WEIPFLNTLILLLSGCTVTWC, SVLSLFLTIVLAIVFTTFQAY, ATGFHGFHVLVGTISLAVCLI, and AWYWHFVDVVWLFLFVSIYWW.

This sequence belongs to the cytochrome c oxidase subunit 3 family. As to quaternary structure, component of the cytochrome c oxidase (complex IV, CIV), a multisubunit enzyme composed of a catalytic core of 3 subunits and several supernumerary subunits. The complex exists as a monomer or a dimer and forms supercomplexes (SCs) in the inner mitochondrial membrane with ubiquinol-cytochrome c oxidoreductase (cytochrome b-c1 complex, complex III, CIII).

Its subcellular location is the mitochondrion inner membrane. The catalysed reaction is 4 Fe(II)-[cytochrome c] + O2 + 8 H(+)(in) = 4 Fe(III)-[cytochrome c] + 2 H2O + 4 H(+)(out). In terms of biological role, component of the cytochrome c oxidase, the last enzyme in the mitochondrial electron transport chain which drives oxidative phosphorylation. The respiratory chain contains 3 multisubunit complexes succinate dehydrogenase (complex II, CII), ubiquinol-cytochrome c oxidoreductase (cytochrome b-c1 complex, complex III, CIII) and cytochrome c oxidase (complex IV, CIV), that cooperate to transfer electrons derived from NADH and succinate to molecular oxygen, creating an electrochemical gradient over the inner membrane that drives transmembrane transport and the ATP synthase. Cytochrome c oxidase is the component of the respiratory chain that catalyzes the reduction of oxygen to water. Electrons originating from reduced cytochrome c in the intermembrane space (IMS) are transferred via the dinuclear copper A center (CU(A)) of subunit 2 and heme A of subunit 1 to the active site in subunit 1, a binuclear center (BNC) formed by heme A3 and copper B (CU(B)). The BNC reduces molecular oxygen to 2 water molecules using 4 electrons from cytochrome c in the IMS and 4 protons from the mitochondrial matrix. This chain is Cytochrome c oxidase subunit 3 (COX3), found in Chondrus crispus (Carrageen Irish moss).